We begin with the raw amino-acid sequence, 472 residues long: Flap endonuclease 1 (472 aa).

The tract at residues 1-106 (MGIKGLARFL…EELMKRKERR (106 aa)) is N-domain. Residue aspartate 34 participates in Mg(2+) binding. Residues arginine 47 and arginine 72 each contribute to the DNA site. Positions 88, 160, 162, 181, and 183 each coordinate Mg(2+). An I-domain region spans residues 124 to 263 (TIRKQLIRTI…LTAYKLLKKH (140 aa)). Glutamate 160 is a binding site for DNA. Positions 241 and 243 each coordinate DNA. Residue aspartate 243 coordinates Mg(2+). The interval 348 to 356 (AQTSLDSFF) is interaction with PCNA.

The protein belongs to the XPG/RAD2 endonuclease family. FEN1 subfamily. As to quaternary structure, interacts with PCNA. Three molecules of FEN1 bind to one PCNA trimer with each molecule binding to one PCNA monomer. PCNA stimulates the nuclease activity without altering cleavage specificity. Mg(2+) is required as a cofactor. In terms of processing, phosphorylated. Phosphorylation upon DNA damage induces relocalization to the nuclear plasma.

The protein localises to the nucleus. Its subcellular location is the nucleolus. The protein resides in the nucleoplasm. It localises to the mitochondrion. Its function is as follows. Structure-specific nuclease with 5'-flap endonuclease and 5'-3' exonuclease activities involved in DNA replication and repair. During DNA replication, cleaves the 5'-overhanging flap structure that is generated by displacement synthesis when DNA polymerase encounters the 5'-end of a downstream Okazaki fragment. It enters the flap from the 5'-end and then tracks to cleave the flap base, leaving a nick for ligation. Also involved in the long patch base excision repair (LP-BER) pathway, by cleaving within the apurinic/apyrimidinic (AP) site-terminated flap. Acts as a genome stabilization factor that prevents flaps from equilibrating into structures that lead to duplications and deletions. Also possesses 5'-3' exonuclease activity on nicked or gapped double-stranded DNA, and exhibits RNase H activity. Also involved in replication and repair of rDNA and in repairing mitochondrial DNA. The polypeptide is Flap endonuclease 1 (Cryptosporidium muris (strain RN66)).